Here is a 291-residue protein sequence, read N- to C-terminus: 3-hydroxy-5-phosphonooxypentane-2,4-dione thiolase (291 aa).

The active-site Schiff-base intermediate with substrate is Lys-203.

It belongs to the DeoC/FbaB aldolase family. As to quaternary structure, homodecamer.

It is found in the cytoplasm. It catalyses the reaction dihydroxyacetone phosphate + acetyl-CoA = 3-hydroxy-2,4-dioxopentyl phosphate + CoA. In terms of biological role, involved in the degradation of phospho-AI-2, thereby terminating induction of the lsr operon and closing the AI-2 signaling cycle. Catalyzes the transfer of an acetyl moiety from 3-hydroxy-5-phosphonooxypentane-2,4-dione to CoA to form glycerone phosphate and acetyl-CoA. The protein is 3-hydroxy-5-phosphonooxypentane-2,4-dione thiolase of Yersinia pestis bv. Antiqua (strain Antiqua).